A 212-amino-acid chain; its full sequence is Casparian strip membrane protein 1 (212 aa).

Positions 1–28 are disordered; that stretch reads MDSSNSTKETGDIPIPVTSSKSSKAAPP. Over 1 to 49 the chain is Cytoplasmic; sequence MDSSNSTKETGDIPIPVTSSKSSKAAPPPVVAAKAKSTTKQPLVSGWKR. A compositionally biased stretch (low complexity) spans 16-28; sequence PVTSSKSSKAAPP. Residues 50–70 traverse the membrane as a helical segment; it reads GLGIIDFILRICAIAAALAAA. At 71-100 the chain is on the extracellular side; it reads TAMGTTSQQLPFFTQFFQFKADYNDLPAFT. The chain crosses the membrane as a helical span at residues 101–121; sequence FFVIANAMAGAYLVLSLPFSI. Residues 122–133 are Cytoplasmic-facing; sequence LCIVRPHILGAR. The chain crosses the membrane as a helical span at residues 134–154; the sequence is LMLLVFDTVAVPLVTAAASAA. Over 155 to 186 the chain is Extracellular; it reads ASIVYLAHNGNSDANWVAICRQFNDFCQRVSG. A helical transmembrane segment spans residues 187–207; that stretch reads AVVASFITALLFVVLVAVSAV. At 208–212 the chain is on the cytoplasmic side; it reads ALRQK.

It belongs to the Casparian strip membrane proteins (CASP) family. Homodimer and heterodimers.

Its subcellular location is the cell membrane. Its function is as follows. Regulates membrane-cell wall junctions and localized cell wall deposition. Required for establishment of the Casparian strip membrane domain (CSD) and the subsequent formation of Casparian strips, a cell wall modification of the root endodermis that determines an apoplastic barrier between the intraorganismal apoplasm and the extraorganismal apoplasm and prevents lateral diffusion. The sequence is that of Casparian strip membrane protein 1 from Helianthus annuus (Common sunflower).